The primary structure comprises 548 residues: Membrane protein insertase YidC (548 aa).

The chain crosses the membrane as a helical span at residues 6–26 (NLLVIALLFVSFMIWQAWEQD). A disordered region spans residues 28–55 (NPQPQAQQTTQTTTTAAGSAADQGVPAS). Low complexity predominate over residues 30–50 (QPQAQQTTQTTTTAAGSAADQ). Transmembrane regions (helical) follow at residues 350 to 370 (FVGNWGFSIIIITFIVRGIMY), 420 to 440 (LGGCFPLLIQMPIFLALYYML), 458 to 478 (LSAQDPYYILPILMGVTMFFI), and 499 to 519 (PVIFTVFFLWFPSGLVLYYIV).

The protein belongs to the OXA1/ALB3/YidC family. Type 1 subfamily. In terms of assembly, interacts with the Sec translocase complex via SecD. Specifically interacts with transmembrane segments of nascent integral membrane proteins during membrane integration.

Its subcellular location is the cell inner membrane. In terms of biological role, required for the insertion and/or proper folding and/or complex formation of integral membrane proteins into the membrane. Involved in integration of membrane proteins that insert both dependently and independently of the Sec translocase complex, as well as at least some lipoproteins. Aids folding of multispanning membrane proteins. This Escherichia coli O139:H28 (strain E24377A / ETEC) protein is Membrane protein insertase YidC.